Consider the following 438-residue polypeptide: MIQNIVIIGTQWGDEGKGKIIDFLTPQVQYVVRYQGGHNAGHTIVVNHKKVTLHLIPSGILHDNIINIIAGGVVLSPVILVKEIQKLKKINVLVDDRIFISESCSLILPYHIAIDLAREKISTTVITNNNVIIGTTGCGIGPAYEDKVARRALRVYDLYNLKNFENKLKNIADFYNFQLVQYYHAEPIDYHVVMDEIITVSDILIKKVIDVPELLLNARKRGDKIIFEGAQGSLLDIDHGTYPYVTSSHTTSGGAIVGIGVGPKYIDYVLGIMKAYSTRVGNGPFPTELSGDIAEWLCTRGQEFGSTTGRRRRTGWFDAVSVRHAIKISSINSACLTKIDILDGLKYVKICVAYQSFNGEIIYNFPYSLENLKNITPVYEVLPGWSGRTTGIKKFNQLPLEAKQYIKRIEEVIGIPIDIISTGPDRLMNIIVRNPLNF.

Residues 13–19 (GDEGKGK) and 41–43 (GHT) contribute to the GTP site. Asp-14 acts as the Proton acceptor in catalysis. Positions 14 and 41 each coordinate Mg(2+). IMP-binding positions include 14 to 17 (DEGK), 39 to 42 (NAGH), Thr-136, Arg-150, Gln-231, Thr-246, and Arg-310. Residue His-42 is the Proton donor of the active site. 306 to 312 (STTGRRR) serves as a coordination point for substrate. Residues Arg-312, 338 to 340 (KID), and 421 to 423 (STG) contribute to the GTP site.

Belongs to the adenylosuccinate synthetase family. As to quaternary structure, homodimer. Requires Mg(2+) as cofactor.

The protein resides in the cytoplasm. It catalyses the reaction IMP + L-aspartate + GTP = N(6)-(1,2-dicarboxyethyl)-AMP + GDP + phosphate + 2 H(+). The protein operates within purine metabolism; AMP biosynthesis via de novo pathway; AMP from IMP: step 1/2. Its function is as follows. Plays an important role in the de novo pathway of purine nucleotide biosynthesis. Catalyzes the first committed step in the biosynthesis of AMP from IMP. The protein is Adenylosuccinate synthetase of Blochmanniella floridana.